The chain runs to 21 residues: GLFGKILGVGKKVLCGLSGMC.

As to expression, expressed by the skin glands.

The protein resides in the secreted. Its function is as follows. Antimicrobial peptide active against the Gram-positive bacterium S.aureus (MIC=12.5 uM) and against the Gram-negative bacteria E.coli (MIC=3 uM). Has antifungal activity against C.albicans (MIC=50 uM). Has some hemolytic activity against human erythrocytes (LC(50)=40 uM). This chain is Nigrocin-2GRb, found in Odorrana grahami (Yunnanfu frog).